A 236-amino-acid polypeptide reads, in one-letter code: 28 kDa antigen (236 aa).

A signal peptide spans 1 to 22 (MPNRRRCKLSTAISTVATLAIA). The interval 76–105 (PVPSLTGTDDPGNGLRTPGLTSPDLTNQEL) is disordered. Residues 94-105 (GLTSPDLTNQEL) are compositionally biased toward polar residues.

The protein to M.tuberculosis ERP.

The sequence is that of 28 kDa antigen from Mycobacterium leprae (strain TN).